A 49-amino-acid chain; its full sequence is Putative exported peptide YydF (49 aa).

In terms of biological role, suggested to be the precursor for an exported, modified peptide that has antimicrobial and/or signaling properties. Synthesis requires YydG and YydH; the peptide is proposed to be exported by the YydIJ transporter. In the absence of the transporter, the modified peptide activates the LiaRS two-component regulatory system, possibly by eliciting cell envelope stress. This activation can occur in trans in cocultured cells lacking either the transporter or the whole operon. This chain is Putative exported peptide YydF (yydF), found in Bacillus subtilis (strain 168).